We begin with the raw amino-acid sequence, 311 residues long: Probable manganese-dependent inorganic pyrophosphatase (311 aa).

Residues histidine 9, aspartate 13, aspartate 15, aspartate 75, histidine 97, and aspartate 149 each coordinate Mn(2+).

It belongs to the PPase class C family. It depends on Mn(2+) as a cofactor.

Its subcellular location is the cytoplasm. The enzyme catalyses diphosphate + H2O = 2 phosphate + H(+). The sequence is that of Probable manganese-dependent inorganic pyrophosphatase from Shouchella clausii (strain KSM-K16) (Alkalihalobacillus clausii).